The chain runs to 400 residues: S-adenosylmethionine synthase (400 aa).

136–141 (GQGSVD) contributes to the ATP binding site.

This sequence belongs to the AdoMet synthase 2 family. Requires Mg(2+) as cofactor.

The catalysed reaction is L-methionine + ATP + H2O = S-adenosyl-L-methionine + phosphate + diphosphate. Its pathway is amino-acid biosynthesis; S-adenosyl-L-methionine biosynthesis; S-adenosyl-L-methionine from L-methionine: step 1/1. Its function is as follows. Catalyzes the formation of S-adenosylmethionine from methionine and ATP. This is S-adenosylmethionine synthase from Thermoplasma volcanium (strain ATCC 51530 / DSM 4299 / JCM 9571 / NBRC 15438 / GSS1).